The chain runs to 315 residues: Lamassu protein LmuA (315 aa).

Its function is as follows. Component of antiviral defense system Lamassu type I, composed of LmuA and LmuB. Expression of Lamassu type I in B.subtilis (strain BEST7003) confers resistance to phages phi3T, SpBeta and SPR. This is Lamassu protein LmuA from Bacillus sp. (strain NCIM 5461 / CCTCC AB 2011126 / NIO-1130).